The chain runs to 338 residues: Malate dehydrogenase, mitochondrial (338 aa).

The transit peptide at methionine 1–asparagine 24 directs the protein to the mitochondrion. Residues glycine 31 to glycine 37 and aspartate 57 each bind NAD(+). A glycan (O-linked (GlcNAc) serine) is linked at serine 33. 2 positions are modified to N6-acetyllysine; alternate: lysine 78 and lysine 91. 2 positions are modified to N6-succinyllysine; alternate: lysine 78 and lysine 91. Substrate-binding residues include arginine 104 and arginine 110. Residues asparagine 117 and isoleucine 140–asparagine 142 each bind NAD(+). Asparagine 142 provides a ligand contact to substrate. Lysine 165 carries the N6-acetyllysine modification. Residue arginine 176 coordinates substrate. At lysine 185 the chain carries N6-acetyllysine; alternate. Lysine 185 carries the post-translational modification N6-succinyllysine; alternate. Histidine 200 functions as the Proton acceptor in the catalytic mechanism. Lysine 203 is subject to N6-succinyllysine. Residues lysine 215 and lysine 239 each carry the N6-acetyllysine; alternate modification. Lysine 215 and lysine 239 each carry N6-succinyllysine; alternate. Residue lysine 239 is modified to N6-malonyllysine; alternate. At serine 246 the chain carries Phosphoserine. Methionine 251 serves as a coordination point for NAD(+). An N6-succinyllysine modification is found at lysine 269. N6-acetyllysine; alternate occurs at positions 296, 301, 307, 314, and 324. 5 positions are modified to N6-succinyllysine; alternate: lysine 296, lysine 301, lysine 307, lysine 314, and lysine 324. At lysine 307 the chain carries N6-malonyllysine; alternate. The residue at position 326 (serine 326) is a Phosphoserine. N6-acetyllysine; alternate occurs at positions 328, 329, and 335. An N6-succinyllysine; alternate modification is found at lysine 328. Lysine 329 carries the N6-malonyllysine; alternate modification. Lysine 335 is subject to N6-succinyllysine; alternate.

It belongs to the LDH/MDH superfamily. MDH type 1 family. In terms of assembly, homodimer. Acetylation is enhanced by up to 67% after treatment either with trichostin A (TSA) or with nicotinamide (NAM) with the appearance of tri- and tetraacetylations. Glucose also increases acetylation by about 60%.

Its subcellular location is the mitochondrion matrix. The enzyme catalyses (S)-malate + NAD(+) = oxaloacetate + NADH + H(+). Its activity is regulated as follows. Enzyme activity is enhanced by acetylation. This is Malate dehydrogenase, mitochondrial (MDH2) from Homo sapiens (Human).